A 298-amino-acid chain; its full sequence is Ribosomal protein L11 methyltransferase (298 aa).

Positions 152, 173, 195, and 234 each coordinate S-adenosyl-L-methionine.

It belongs to the methyltransferase superfamily. PrmA family.

Its subcellular location is the cytoplasm. It carries out the reaction L-lysyl-[protein] + 3 S-adenosyl-L-methionine = N(6),N(6),N(6)-trimethyl-L-lysyl-[protein] + 3 S-adenosyl-L-homocysteine + 3 H(+). In terms of biological role, methylates ribosomal protein L11. This Ralstonia nicotianae (strain ATCC BAA-1114 / GMI1000) (Ralstonia solanacearum) protein is Ribosomal protein L11 methyltransferase.